Consider the following 72-residue polypeptide: UPF0154 protein RBAM_017710 (72 aa).

A helical transmembrane segment spans residues 4–24 (WVGILVGVVALLIGVALGFFI).

This sequence belongs to the UPF0154 family.

The protein resides in the cell membrane. The polypeptide is UPF0154 protein RBAM_017710 (Bacillus velezensis (strain DSM 23117 / BGSC 10A6 / LMG 26770 / FZB42) (Bacillus amyloliquefaciens subsp. plantarum)).